We begin with the raw amino-acid sequence, 94 residues long: Pyrimidine/purine nucleoside phosphorylase (94 aa).

Belongs to the nucleoside phosphorylase PpnP family.

It carries out the reaction a purine D-ribonucleoside + phosphate = a purine nucleobase + alpha-D-ribose 1-phosphate. The catalysed reaction is adenosine + phosphate = alpha-D-ribose 1-phosphate + adenine. It catalyses the reaction cytidine + phosphate = cytosine + alpha-D-ribose 1-phosphate. The enzyme catalyses guanosine + phosphate = alpha-D-ribose 1-phosphate + guanine. It carries out the reaction inosine + phosphate = alpha-D-ribose 1-phosphate + hypoxanthine. The catalysed reaction is thymidine + phosphate = 2-deoxy-alpha-D-ribose 1-phosphate + thymine. It catalyses the reaction uridine + phosphate = alpha-D-ribose 1-phosphate + uracil. The enzyme catalyses xanthosine + phosphate = alpha-D-ribose 1-phosphate + xanthine. Catalyzes the phosphorolysis of diverse nucleosides, yielding D-ribose 1-phosphate and the respective free bases. Can use uridine, adenosine, guanosine, cytidine, thymidine, inosine and xanthosine as substrates. Also catalyzes the reverse reactions. The sequence is that of Pyrimidine/purine nucleoside phosphorylase from Alcanivorax borkumensis (strain ATCC 700651 / DSM 11573 / NCIMB 13689 / SK2).